The primary structure comprises 406 residues: Multidrug resistance protein MdtG (406 aa).

11 consecutive transmembrane segments (helical) span residues 16-36, 56-76, 90-110, 113-133, 144-164, 171-191, 222-242, 254-274, 288-308, 317-337, and 376-396; these read VAWL…PFLP, LVFS…GGLA, LGMA…QFLL, ALLG…ATQV, TLST…GLLA, PVFF…LFFT, LFVT…ILTL, IAFI…LSAP, ILIT…FVQT, FLLG…LVYN, and AVFC…WNSL.

It belongs to the major facilitator superfamily. DHA1 family. MdtG (TC 2.A.1.2.20) subfamily.

The protein localises to the cell inner membrane. This Citrobacter koseri (strain ATCC BAA-895 / CDC 4225-83 / SGSC4696) protein is Multidrug resistance protein MdtG.